Consider the following 86-residue polypeptide: Large ribosomal subunit protein bL31B (86 aa).

The protein belongs to the bacterial ribosomal protein bL31 family. Type B subfamily. As to quaternary structure, part of the 50S ribosomal subunit.

The sequence is that of Large ribosomal subunit protein bL31B from Erwinia tasmaniensis (strain DSM 17950 / CFBP 7177 / CIP 109463 / NCPPB 4357 / Et1/99).